Here is a 273-residue protein sequence, read N- to C-terminus: NH(3)-dependent NAD(+) synthetase (273 aa).

47–54 (GISGGQDS) contributes to the ATP binding site. Aspartate 53 is a Mg(2+) binding site. Arginine 139 lines the deamido-NAD(+) pocket. Threonine 159 is an ATP binding site. Mg(2+) is bound at residue glutamate 164. Positions 172 and 179 each coordinate deamido-NAD(+). Lysine 188 and threonine 210 together coordinate ATP. Residue 259-260 (HK) coordinates deamido-NAD(+).

Belongs to the NAD synthetase family. As to quaternary structure, homodimer.

It carries out the reaction deamido-NAD(+) + NH4(+) + ATP = AMP + diphosphate + NAD(+) + H(+). It participates in cofactor biosynthesis; NAD(+) biosynthesis; NAD(+) from deamido-NAD(+) (ammonia route): step 1/1. Its function is as follows. Catalyzes the ATP-dependent amidation of deamido-NAD to form NAD. Uses ammonia as a nitrogen source. In Staphylococcus saprophyticus subsp. saprophyticus (strain ATCC 15305 / DSM 20229 / NCIMB 8711 / NCTC 7292 / S-41), this protein is NH(3)-dependent NAD(+) synthetase.